A 147-amino-acid polypeptide reads, in one-letter code: Putative HTH-type transcriptional regulator slr0846 (147 aa).

Positions 2–130 (KLTTKSHYSV…YSITLADLYY (129 aa)) constitute an HTH rrf2-type domain.

The protein is Putative HTH-type transcriptional regulator slr0846 of Synechocystis sp. (strain ATCC 27184 / PCC 6803 / Kazusa).